A 314-amino-acid chain; its full sequence is Methionyl-tRNA formyltransferase (314 aa).

Residue 112–115 participates in (6S)-5,6,7,8-tetrahydrofolate binding; it reads SLLP.

It belongs to the Fmt family.

The catalysed reaction is L-methionyl-tRNA(fMet) + (6R)-10-formyltetrahydrofolate = N-formyl-L-methionyl-tRNA(fMet) + (6S)-5,6,7,8-tetrahydrofolate + H(+). In terms of biological role, attaches a formyl group to the free amino group of methionyl-tRNA(fMet). The formyl group appears to play a dual role in the initiator identity of N-formylmethionyl-tRNA by promoting its recognition by IF2 and preventing the misappropriation of this tRNA by the elongation apparatus. The protein is Methionyl-tRNA formyltransferase of Buchnera aphidicola subsp. Schizaphis graminum (strain Sg).